A 644-amino-acid polypeptide reads, in one-letter code: Threonine--tRNA ligase (644 aa).

Residues 3–64 form the TGS domain; it reads EMIRITFPDG…QEDGSISIIT (62 aa). Residues 245 to 542 form a catalytic region; it reads DHRKLGKELE…LIEEYKGAFP (298 aa). 3 residues coordinate Zn(2+): Cys338, His389, and His519.

Belongs to the class-II aminoacyl-tRNA synthetase family. As to quaternary structure, homodimer. The cofactor is Zn(2+).

It localises to the cytoplasm. It catalyses the reaction tRNA(Thr) + L-threonine + ATP = L-threonyl-tRNA(Thr) + AMP + diphosphate + H(+). Catalyzes the attachment of threonine to tRNA(Thr) in a two-step reaction: L-threonine is first activated by ATP to form Thr-AMP and then transferred to the acceptor end of tRNA(Thr). Also edits incorrectly charged L-seryl-tRNA(Thr). This Geobacillus sp. (strain WCH70) protein is Threonine--tRNA ligase.